We begin with the raw amino-acid sequence, 377 residues long: Actin-related protein T2 (377 aa).

It belongs to the actin family.

The protein localises to the cytoplasm. It is found in the cytoskeleton. The sequence is that of Actin-related protein T2 (Actrt2) from Mus musculus (Mouse).